Reading from the N-terminus, the 488-residue chain is Metalloreductase STEAP3 (488 aa).

At M1 to R207 the chain is on the cytoplasmic side. A phosphoserine mark is found at S11, S17, and S20. NADP(+)-binding positions include S36–F39, S58–R59, V91–S98, N116, and A151. 2 residues coordinate FAD: W152 and D160. Residues L208 to A228 traverse the membrane as a helical segment. Residue Y229 coordinates Fe(3+). At Y229–T258 the chain is on the vesicular side. N256 is a glycosylation site (N-linked (GlcNAc...) asparagine). Residues L259–A279 form a helical membrane-spanning segment. One can recognise a Ferric oxidoreductase domain in the interval L259–T407. Residues L280–Q304 lie on the Cytoplasmic side of the membrane. 3 residues coordinate FAD: Q281, R302, and K303. A helical transmembrane segment spans residues I305–L325. H316 lines the heme b pocket. Y319 is a binding site for Fe(3+). Topologically, residues R326–E358 are vesicular. A helical transmembrane segment spans residues I359–I379. FAD is bound at residue S378. Residues P380–E390 lie on the Cytoplasmic side of the membrane. Residues F391–L411 traverse the membrane as a helical segment. An FAD-binding site is contributed by Q395. Residue H409 coordinates heme b. The Vesicular portion of the chain corresponds to T412–T433. A helical transmembrane segment spans residues L434–L454. Residues S455 to V488 lie on the Cytoplasmic side of the membrane. Position 486 is a phosphoserine (S486).

It belongs to the STEAP family. Homodimer. Interacts with BNIP3L, MYT1, RHBDL4/RHBDD1 and TCTP. FAD serves as cofactor. It depends on heme b as a cofactor. Proteolytically cleaved by RHBDL4/RHBDD1. RHBDL4/RHBDD1-induced cleavage occurs at multiple sites in a glycosylation-independent manner. In terms of processing, glycosylated.

The protein localises to the endosome membrane. The enzyme catalyses 2 Fe(2+) + NADP(+) + H(+) = 2 Fe(3+) + NADPH. It carries out the reaction 2 Cu(+) + NADP(+) + H(+) = 2 Cu(2+) + NADPH. Integral membrane protein that functions as a NADPH-dependent ferric-chelate reductase, using NADPH from one side of the membrane to reduce a Fe(3+) chelate that is bound on the other side of the membrane. Mediates sequential transmembrane electron transfer from NADPH to FAD and onto heme, and finally to the Fe(3+) chelate. Can also reduce Cu(2+) to Cu(1+). Mediates efficient transferrin-dependent iron uptake in erythroid cells. May play a role downstream of p53/TP53 to interface apoptosis and cell cycle progression. Indirectly involved in exosome secretion by facilitating the secretion of proteins such as TCTP. This is Metalloreductase STEAP3 (Steap3) from Rattus norvegicus (Rat).